The primary structure comprises 232 residues: Large ribosomal subunit protein uL1 (232 aa).

The protein belongs to the universal ribosomal protein uL1 family. As to quaternary structure, part of the 50S ribosomal subunit.

In terms of biological role, binds directly to 23S rRNA. The L1 stalk is quite mobile in the ribosome, and is involved in E site tRNA release. Protein L1 is also a translational repressor protein, it controls the translation of the L11 operon by binding to its mRNA. The chain is Large ribosomal subunit protein uL1 from Pelotomaculum thermopropionicum (strain DSM 13744 / JCM 10971 / SI).